A 473-amino-acid polypeptide reads, in one-letter code: ATP synthase subunit beta, chloroplastic (473 aa).

172–179 is a binding site for ATP; that stretch reads GGAGVGKT.

It belongs to the ATPase alpha/beta chains family. F-type ATPases have 2 components, CF(1) - the catalytic core - and CF(0) - the membrane proton channel. CF(1) has five subunits: alpha(3), beta(3), gamma(1), delta(1), epsilon(1). CF(0) has four main subunits: a(1), b(1), b'(1) and c(9-12).

It localises to the plastid. It is found in the chloroplast thylakoid membrane. The catalysed reaction is ATP + H2O + 4 H(+)(in) = ADP + phosphate + 5 H(+)(out). In terms of biological role, produces ATP from ADP in the presence of a proton gradient across the membrane. The catalytic sites are hosted primarily by the beta subunits. This is ATP synthase subunit beta, chloroplastic from Pteridium esculentum (Bracken fern).